A 115-amino-acid polypeptide reads, in one-letter code: Small ribosomal subunit protein bS6 (115 aa).

Belongs to the bacterial ribosomal protein bS6 family.

Its function is as follows. Binds together with bS18 to 16S ribosomal RNA. This is Small ribosomal subunit protein bS6 from Syntrophotalea carbinolica (strain DSM 2380 / NBRC 103641 / GraBd1) (Pelobacter carbinolicus).